Reading from the N-terminus, the 105-residue chain is Oxytocin-neurophysin 1 (105 aa).

Cys1 and Cys6 are disulfide-bonded. At Gly9 the chain carries Glycine amide. Cystine bridges form between Cys22-Cys66, Cys25-Cys39, Cys33-Cys56, Cys40-Cys46, Cys73-Cys85, Cys79-Cys97, and Cys86-Cys91.

This sequence belongs to the vasopressin/oxytocin family. Interacts with oxytocin receptor (Ki=1.5 nM). Interacts with vasopressin V1aR/AVPR1A (Ki=37 nM), V1bR/AVPR1B (Ki=222 nM), and V2R/AVPR2 receptors (Ki=823 nM).

The protein resides in the secreted. Neurophysin 1 specifically binds oxytocin. Functionally, oxytocin causes contraction of the smooth muscle of the uterus and of the mammary gland. Acts by binding to oxytocin receptor (OXTR). The protein is Oxytocin-neurophysin 1 (OXT) of Equus caballus (Horse).